The primary structure comprises 156 residues: SsrA-binding protein (156 aa).

Belongs to the SmpB family.

Its subcellular location is the cytoplasm. Required for rescue of stalled ribosomes mediated by trans-translation. Binds to transfer-messenger RNA (tmRNA), required for stable association of tmRNA with ribosomes. tmRNA and SmpB together mimic tRNA shape, replacing the anticodon stem-loop with SmpB. tmRNA is encoded by the ssrA gene; the 2 termini fold to resemble tRNA(Ala) and it encodes a 'tag peptide', a short internal open reading frame. During trans-translation Ala-aminoacylated tmRNA acts like a tRNA, entering the A-site of stalled ribosomes, displacing the stalled mRNA. The ribosome then switches to translate the ORF on the tmRNA; the nascent peptide is terminated with the 'tag peptide' encoded by the tmRNA and targeted for degradation. The ribosome is freed to recommence translation, which seems to be the essential function of trans-translation. The chain is SsrA-binding protein from Clostridium botulinum (strain Loch Maree / Type A3).